A 376-amino-acid polypeptide reads, in one-letter code: UDP-N-acetylglucosamine 2-epimerase (376 aa).

Residues Arg10, Lys15, Asp95, Glu117, His213, Gln271, Phe276, Ser290–Gly292, Glu296, and Arg313 contribute to the substrate site.

Belongs to the UDP-N-acetylglucosamine 2-epimerase family. As to quaternary structure, homodimer.

The protein resides in the cytoplasm. The catalysed reaction is UDP-N-acetyl-alpha-D-glucosamine = UDP-N-acetyl-alpha-D-mannosamine. It participates in bacterial outer membrane biogenesis; enterobacterial common antigen biosynthesis. Allosterically activated by its substrate, UDP-GlcNAc. Catalyzes the reversible epimerization at C-2 of UDP-N-acetylglucosamine (UDP-GlcNAc) and thereby provides bacteria with UDP-N-acetylmannosamine (UDP-ManNAc), the activated donor of ManNAc residues. Also involved in bacteriophage N4 adsorption. This Escherichia coli (strain K12) protein is UDP-N-acetylglucosamine 2-epimerase.